Consider the following 217-residue polypeptide: Small ribosomal subunit protein uS3 (217 aa).

Residues 38–106 enclose the KH type-2 domain; sequence IRKYIEQRLA…RVHINIIEIK (69 aa).

The protein belongs to the universal ribosomal protein uS3 family. In terms of assembly, part of the 30S ribosomal subunit. Forms a tight complex with proteins S10 and S14.

In terms of biological role, binds the lower part of the 30S subunit head. Binds mRNA in the 70S ribosome, positioning it for translation. In Lactiplantibacillus plantarum (strain ATCC BAA-793 / NCIMB 8826 / WCFS1) (Lactobacillus plantarum), this protein is Small ribosomal subunit protein uS3.